A 422-amino-acid chain; its full sequence is Keratin, type I cytoskeletal 23 (422 aa).

Positions 1-24 (MNSSHSFNQTYSASVHSLGSTRGR) are enriched in polar residues. Residues 1–35 (MNSSHSFNQTYSASVHSLGSTRGRQGSCHRAPSVH) form a disordered region. Positions 1–71 (MNSSHSFNQT…GRSSPLLGGN (71 aa)) are head. The tract at residues 72–107 (GKATMQNLNDRLATYLEKVRALEEANSKLETRILRW) is coil 1A. One can recognise an IF rod domain in the interval 72-382 (GKATMQNLND…RLLEGDTEGT (311 aa)). The interval 108–125 (HQEREPSHRKDYSQYEEN) is linker 1. A coil 1B region spans residues 126–217 (ISRLQEQIVD…KRHEQEMEEN (92 aa)). Residues 218 to 240 (HLPSDFKVSVKVDTTPGEDLIKV) are linker 12. Residues 241–378 (LEDMRQEYEL…ATYRRLLEGD (138 aa)) are coil 2. Residues 379–422 (TEGTMDGSESRLKGSEASTIKAITQESVNGRIVLSQVNEIQKHI) form a rod-like helical tail region.

It belongs to the intermediate filament family. In terms of assembly, heterotetramer of two type I and two type II keratins.

The polypeptide is Keratin, type I cytoskeletal 23 (Krt23) (Mus musculus (Mouse)).